The chain runs to 327 residues: MSEIKTDDPKRGIKLRGADKTARIPIKVVPLQEKLKKPEWIRAKLPSRKFFEIKDILREQKMHTVCEEASCPNIGECFSKGTATFMIMGDICTRRCPFCDVGHGRPNMLDPDEPRNLAESVKAMNLRYVVITSVDRDDLRDGGAQHFADCIKAIRETSPNTKIEILVPDFRGRLDIALKILAETPPDVMNHNLETHPSLYRKARPGANYQHSLDLLKRYKEMMPHIPTKSGIMVGLGETDEDVREIMRDMRAHNIEMITIGQYLQPSDGHLPVLRYVTPEQFKIFEKEAYELGFSNAAIGAMVRSSYHADEQAAEALRESHGGCGHH.

The [4Fe-4S] cluster site is built by Cys66, Cys71, Cys77, Cys92, Cys96, Cys99, and Ser306. The region spanning Phe78–Ser295 is the Radical SAM core domain.

Belongs to the radical SAM superfamily. Lipoyl synthase family. It depends on [4Fe-4S] cluster as a cofactor.

The protein resides in the cytoplasm. The enzyme catalyses [[Fe-S] cluster scaffold protein carrying a second [4Fe-4S](2+) cluster] + N(6)-octanoyl-L-lysyl-[protein] + 2 oxidized [2Fe-2S]-[ferredoxin] + 2 S-adenosyl-L-methionine + 4 H(+) = [[Fe-S] cluster scaffold protein] + N(6)-[(R)-dihydrolipoyl]-L-lysyl-[protein] + 4 Fe(3+) + 2 hydrogen sulfide + 2 5'-deoxyadenosine + 2 L-methionine + 2 reduced [2Fe-2S]-[ferredoxin]. Its pathway is protein modification; protein lipoylation via endogenous pathway; protein N(6)-(lipoyl)lysine from octanoyl-[acyl-carrier-protein]: step 2/2. In terms of biological role, catalyzes the radical-mediated insertion of two sulfur atoms into the C-6 and C-8 positions of the octanoyl moiety bound to the lipoyl domains of lipoate-dependent enzymes, thereby converting the octanoylated domains into lipoylated derivatives. In Neisseria meningitidis serogroup B (strain ATCC BAA-335 / MC58), this protein is Lipoyl synthase.